We begin with the raw amino-acid sequence, 636 residues long: Signal recognition particle receptor subunit alpha (636 aa).

3 disordered regions span residues 132–205 (APTT…ELSK), 217–246 (IQKHGKGLDKSSKSTKSDTPKEKGKKAPRV), and 280–314 (IRGTGPGGQLQDLDCSSSDDEGATQNTKPSATKGT). Composition is skewed to basic and acidic residues over residues 137–146 (KKFEDSEKAK) and 153–165 (IETRGEKTKEKAK). The residue at position 177 (serine 177) is a Phosphoserine. Over residues 217–238 (IQKHGKGLDKSSKSTKSDTPKE) the composition is skewed to basic and acidic residues. Threonine 283 carries the post-translational modification Phosphothreonine. Phosphoserine is present on residues serine 295, serine 296, and serine 297. The span at 302-312 (ATQNTKPSATK) shows a compositional bias: polar residues. Threonine 303 is subject to Phosphothreonine. Residues 417-634 (YVVTFCGVNG…NAKAVVAALM (218 aa)) form an NG domain region. GTP-binding positions include 423–430 (GVNGVGKS) and 518–522 (DTAGR). Threonine 576 bears the Phosphothreonine mark. 586 to 589 (TKFD) serves as a coordination point for GTP.

It belongs to the GTP-binding SRP family. Heterodimer with SRPRB. Interacts with the signal recognition particle (SRP) complex subunit SRP54.

The protein localises to the endoplasmic reticulum membrane. In terms of biological role, component of the SRP (signal recognition particle) receptor. Ensures, in conjunction with the signal recognition particle, the correct targeting of the nascent secretory proteins to the endoplasmic reticulum membrane system. Forms a guanosine 5'-triphosphate (GTP)-dependent complex with the SRP subunit SRP54. SRP receptor compaction and GTPase rearrangement drive SRP-mediated cotranslational protein translocation into the ER. This Mus musculus (Mouse) protein is Signal recognition particle receptor subunit alpha.